Consider the following 266-residue polypeptide: Putative hydro-lyase VF_1377 (266 aa).

The protein belongs to the D-glutamate cyclase family.

The polypeptide is Putative hydro-lyase VF_1377 (Aliivibrio fischeri (strain ATCC 700601 / ES114) (Vibrio fischeri)).